The following is an 811-amino-acid chain: Lysine-specific histone demethylase 1 homolog 3 (811 aa).

Positions 1–10 (MSDQPPPYTP) are enriched in pro residues. The interval 1–79 (MSDQPPPYTP…PSAQPPPRAS (79 aa)) is disordered. Positions 44-55 (NKRKRTGFRRKL) are enriched in basic residues. Residues 56 to 71 (PSGSPAAPVAVAASPS) are compositionally biased toward low complexity. The region spanning 88-189 (NREPTAEAVT…FGVAPAIKER (102 aa)) is the SWIRM domain. Residues glutamate 227, arginine 229, arginine 235, and glutamate 609 each coordinate FAD. A disordered region spans residues 790–811 (RNSSRTKTRPSKLKIGIPKSKS).

Belongs to the flavin monoamine oxidase family. It depends on FAD as a cofactor.

Functionally, probable histone demethylase. The protein is Lysine-specific histone demethylase 1 homolog 3 of Oryza sativa subsp. indica (Rice).